Consider the following 167-residue polypeptide: Ureidoglycolate lyase (167 aa).

It belongs to the ureidoglycolate lyase family. Homodimer. Requires Ni(2+) as cofactor.

The enzyme catalyses (S)-ureidoglycolate = urea + glyoxylate. It participates in nitrogen metabolism; (S)-allantoin degradation. Its function is as follows. Catalyzes the catabolism of the allantoin degradation intermediate (S)-ureidoglycolate, generating urea and glyoxylate. Involved in the utilization of allantoin as nitrogen source. The chain is Ureidoglycolate lyase from Pseudomonas fluorescens (strain Pf0-1).